Here is a 573-residue protein sequence, read N- to C-terminus: MGQTRIQARTATKHIFVSGGVASSLGKGLTASSLGQLLTARGLRVTMQKLDPYLNVDPGTMNPFQHGEVFVTEDGAETDLDVGHYERFLDRDLSRDANVTTGQIYSSVIAKERRGEYLGDTVQVIPHITDEIKNRILAMRGPDLQGQTPDVVITEIGGTVGDIESQPFLEAARQIRHDVGRDNVFFLHVSLVPYLAPSGELKTKPTQHSVAALRNIGIQPDALILRCDREVPQALKSKIALMCDVEVDACISTPDAPSIYDIPKVLHREGLDAYVVRRLGLPFRDVDWTVWGDLLDRVHSPREEVEVALVGKYVDLPDAYLSVTEALRAGGFASRAKVNIRWVASDECETAAGAAAALRDVDAILIPGGFGIRGIEGKVGAIHFARTRGIPLLGLCLGLQCVVIEAARSIGLTDANSTEFEPDTQHPVISTMADQKQAVAGEADLGGTMRLGAYPAVLEKGSVVARAYGSEQVSERHRHRYEVNNAYRDKIATSGLKFSGTSPDGLLVEFVELPAEVHPFFVATQAHPELKSRPTRPHPLFAALIAAALKYKLAERLPVDIPDDELASAEQGA.

An amidoligase domain region spans residues 1–281; sequence MGQTRIQART…DAYVVRRLGL (281 aa). Serine 23 is a binding site for CTP. Residue serine 23 coordinates UTP. ATP-binding positions include 24 to 29 and aspartate 81; that span reads SLGKGL. Mg(2+) contacts are provided by aspartate 81 and glutamate 155. CTP is bound by residues 162-164, 202-207, and lysine 238; these read DIE and KTKPTQ. Residues 202-207 and lysine 238 contribute to the UTP site; that span reads KTKPTQ. Residues 306 to 554 enclose the Glutamine amidotransferase type-1 domain; sequence EVALVGKYVD…IAAALKYKLA (249 aa). Glycine 369 is an L-glutamine binding site. The Nucleophile; for glutamine hydrolysis role is filled by cysteine 396. Residues 397–400, glutamate 419, and arginine 480 contribute to the L-glutamine site; that span reads LGLQ. Catalysis depends on residues histidine 527 and glutamate 529.

The protein belongs to the CTP synthase family. Homotetramer.

It carries out the reaction UTP + L-glutamine + ATP + H2O = CTP + L-glutamate + ADP + phosphate + 2 H(+). The enzyme catalyses L-glutamine + H2O = L-glutamate + NH4(+). The catalysed reaction is UTP + NH4(+) + ATP = CTP + ADP + phosphate + 2 H(+). It functions in the pathway pyrimidine metabolism; CTP biosynthesis via de novo pathway; CTP from UDP: step 2/2. Allosterically activated by GTP, when glutamine is the substrate; GTP has no effect on the reaction when ammonia is the substrate. The allosteric effector GTP functions by stabilizing the protein conformation that binds the tetrahedral intermediate(s) formed during glutamine hydrolysis. Inhibited by the product CTP, via allosteric rather than competitive inhibition. Its function is as follows. Catalyzes the ATP-dependent amination of UTP to CTP with either L-glutamine or ammonia as the source of nitrogen. Regulates intracellular CTP levels through interactions with the four ribonucleotide triphosphates. The polypeptide is CTP synthase (Nocardia farcinica (strain IFM 10152)).